Consider the following 392-residue polypeptide: MNIHEYQAKALLAQYGVGIPRGGVAETPAEATVIAQRLGGEIWAIKAQIHAGGRGKAGGVKLAKTPEEAGEIAKAMLGSRLITHQTSLEGKEVHKVYVEEGLGIEREYYLGIVLDRSLEMPVIMASRQGGVDIEEVAKNSPNEIIKVAVDPMIGFRPFHGRKLAFALGLAKEQVGLFVDFCTSLFRLYVQKDAEIVEINPLVFTSCKRFVALDAKISFDNNALYRHPEIVAMRDLSEEESSEIEAGEYNLNYVKLQGNVGCMVNGAGLAMATMDIIKHEGGEPANFLDVGGGAKPETVAKGFEIILKDPNVKAIFVNIFGGIVRCDRVANGILEAAKIVHVSVPVVVRLDGTNAKEAKEILEQANIPNIFAAPSLEGGAKKAVELACQGGAS.

One can recognise an ATP-grasp domain in the interval 9–244 (KALLAQYGVG…LSEEESSEIE (236 aa)). ATP contacts are provided by residues lysine 46, 53–55 (GRG), glutamate 99, leucine 102, and glutamate 107. 2 residues coordinate Mg(2+): asparagine 199 and aspartate 213. Substrate is bound by residues asparagine 264 and 321 to 323 (GIV).

The protein belongs to the succinate/malate CoA ligase beta subunit family. In terms of assembly, heterotetramer of two alpha and two beta subunits. The cofactor is Mg(2+).

The catalysed reaction is succinate + ATP + CoA = succinyl-CoA + ADP + phosphate. The enzyme catalyses GTP + succinate + CoA = succinyl-CoA + GDP + phosphate. It participates in carbohydrate metabolism; tricarboxylic acid cycle; succinate from succinyl-CoA (ligase route): step 1/1. In terms of biological role, succinyl-CoA synthetase functions in the citric acid cycle (TCA), coupling the hydrolysis of succinyl-CoA to the synthesis of either ATP or GTP and thus represents the only step of substrate-level phosphorylation in the TCA. The beta subunit provides nucleotide specificity of the enzyme and binds the substrate succinate, while the binding sites for coenzyme A and phosphate are found in the alpha subunit. The protein is Succinate--CoA ligase [ADP-forming] subunit beta of Wolinella succinogenes (strain ATCC 29543 / DSM 1740 / CCUG 13145 / JCM 31913 / LMG 7466 / NCTC 11488 / FDC 602W) (Vibrio succinogenes).